A 483-amino-acid chain; its full sequence is Altronate oxidoreductase (483 aa).

18–29 (IIQFGEGNFLRA) is an NAD(+) binding site.

Belongs to the mannitol dehydrogenase family. UxaB subfamily.

It carries out the reaction D-altronate + NAD(+) = keto-D-tagaturonate + NADH + H(+). It participates in carbohydrate metabolism; pentose and glucuronate interconversion. The sequence is that of Altronate oxidoreductase from Escherichia coli O7:K1 (strain IAI39 / ExPEC).